The primary structure comprises 628 residues: Nucleoside-triphosphatase 1 (628 aa).

An N-terminal signal peptide occupies residues 1 to 25; it reads MWLPVYVPLLLVFGVSLSLPQGSLG. Glu236 (proton acceptor) is an active-site residue. Asn432 carries an N-linked (GlcNAc...) asparagine glycan.

This sequence belongs to the GDA1/CD39 NTPase family. Homotetramer.

It is found in the secreted. It localises to the parasitophorous vacuole. It catalyses the reaction a ribonucleoside 5'-triphosphate + H2O = a ribonucleoside 5'-diphosphate + phosphate + H(+). Functionally, may perform an important processing step in the conversion of high energy nucleotides prior to uptake by the parasite and may contribute to intracellular survival and virulence. NTPAse-I has a specific activity 4.5-fold higher than NTPAse-II in hydrolysis of ATP. The primary difference between these isozymes lies in their ability to hydrolyze nucleoside triphosphate versus diphosphate substrates. While NTPAse-II hydrolyzes ATP to ADP and ADP to AMP at almost the same rate, NTPAse-I hydrolyzes ADP to AMP at a much slower rate (0.7% of the rate for ATP). The polypeptide is Nucleoside-triphosphatase 1 (NTP3) (Toxoplasma gondii).